Reading from the N-terminus, the 675-residue chain is MQHTFIYDTCLWILSILIDFFFREVKTRGSFRVPRKGPLILVAAPHANQFVDPLILMLQLRREVGRRTSILVAAKSYRQRFIGLMSRAFGAIPVERAQDLAIRGEGKIFVVAEGDKTAIHGKDTLFTKHSVGDTLLLPNNYGSSHIASIKSDTLLYVKREFRGEDAERVLLSPEGSSYKVAPEIDQTYVYNEVRRRLVKGACIALFPEGGSHDRPEMLPLKAGVAIMALETLSQHPDCGLQLLPCGMNYFHPHRFRSRAVLEFGSPLSIPTEYVELYKAKKRREAIQGVLDMIYDALLSVTVQAPDYETLMVIQACRRLYKPAHIQFALPKVVDLNRKLIVGYNHFKHDPRVIRLHDKILLYNRQLYRLGLRDHQVQSLQYSRFMILYKLVYRCCKLFLLALGALPGAILFSPVFIAAHRISVKKAAAALKASSVKIQGRDILATWKLLVALGMTPILYSFYALLCCYYIYSYKLIPHSSIFVYTVPIISTFLFPMVTYAALRFGEVAVDIYKSIRPLFLALIPSKANAVYILKDERKQLVAEVTDLINKLGPELFPDFDPDRITTTIEKPERPSRFARRLSSSVASDVDNLSQLHDTDLNSEVSAPAPLQNVYLYSPNPSALPPSDEEEKDINDKAKLIRNALRQRMGQRMTEIRSRDTPPEEVFSESDEELSD.

The next 4 membrane-spanning stretches (helical) occupy residues 2–22 (QHTFIYDTCLWILSILIDFFF), 397–417 (LFLLALGALPGAILFSPVFIA), 448–468 (LLVALGMTPILYSFYALLCCY), and 481–501 (IFVYTVPIISTFLFPMVTYAA). 2 disordered regions span residues 616-635 (YSPNPSALPPSDEEEKDIND) and 646-675 (QRMGQRMTEIRSRDTPPEEVFSESDEELSD). A compositionally biased stretch (acidic residues) spans 665–675 (VFSESDEELSD). Residue S669 is modified to Phosphoserine.

Belongs to the 1-acyl-sn-glycerol-3-phosphate acyltransferase family.

It localises to the endoplasmic reticulum membrane. This is an uncharacterized protein from Schizosaccharomyces pombe (strain 972 / ATCC 24843) (Fission yeast).